The primary structure comprises 299 residues: NAD kinase (299 aa).

D71 acts as the Proton acceptor in catalysis. Residues 71–72 (DG), 145–146 (ND), R173, D175, 186–191 (TAYSLS), A210, and Q248 each bind NAD(+).

This sequence belongs to the NAD kinase family. It depends on a divalent metal cation as a cofactor.

The protein resides in the cytoplasm. The catalysed reaction is NAD(+) + ATP = ADP + NADP(+) + H(+). In terms of biological role, involved in the regulation of the intracellular balance of NAD and NADP, and is a key enzyme in the biosynthesis of NADP. Catalyzes specifically the phosphorylation on 2'-hydroxyl of the adenosine moiety of NAD to yield NADP. The sequence is that of NAD kinase from Bordetella pertussis (strain Tohama I / ATCC BAA-589 / NCTC 13251).